A 1157-amino-acid chain; its full sequence is ATP-dependent helicase/deoxyribonuclease subunit B (1157 aa).

The region spanning 1-299 (MSIRFIIGRA…SHLEKYFFVR (299 aa)) is the UvrD-like helicase ATP-binding domain. 8–15 (GRAGAGKT) contributes to the ATP binding site. The UvrD-like helicase C-terminal domain occupies 279–590 (GNTARFKSPA…LVASLERSRN (312 aa)). [4Fe-4S] cluster contacts are provided by cysteine 792, cysteine 1112, cysteine 1115, and cysteine 1121.

This sequence belongs to the helicase family. AddB/RexB type 1 subfamily. In terms of assembly, heterodimer of AddA and AddB. Mg(2+) serves as cofactor. It depends on [4Fe-4S] cluster as a cofactor.

Functionally, the heterodimer acts as both an ATP-dependent DNA helicase and an ATP-dependent, dual-direction single-stranded exonuclease. Recognizes the chi site generating a DNA molecule suitable for the initiation of homologous recombination. The AddB subunit has 5' -&gt; 3' nuclease activity but not helicase activity. This is ATP-dependent helicase/deoxyribonuclease subunit B from Pelotomaculum thermopropionicum (strain DSM 13744 / JCM 10971 / SI).